The following is a 537-amino-acid chain: Interleukin-2 receptor subunit beta (537 aa).

The signal sequence occupies residues 1 to 26 (MATVDLSWRLPLYILLLLLATTWVSA). Residues 27 to 239 (AVNDCSHLKC…FRTRPADPKE (213 aa)) lie on the Extracellular side of the membrane. A disulfide bond links Cys-36 and Cys-46. N-linked (GlcNAc...) asparagine glycans are attached at residues Asn-43, Asn-55, and Asn-71. Cys-74 and Cys-86 form a disulfide bridge. The 101-residue stretch at 135 to 235 (APHSLQVLHI…QPMAFRTRPA (101 aa)) folds into the Fibronectin type-III domain. Residue Asn-150 is glycosylated (N-linked (GlcNAc...) asparagine). The WSXWS motif motif lies at 221-225 (WSPWS). The helical transmembrane segment at 240 to 267 (IFPLPWLRCLLLVLGCFFGFLSCVCVLV) threads the bilayer. The Cytoplasmic segment spans residues 268-537 (KCRYLGPWLK…LQAQDSAHLI (270 aa)). The short motif at 280–288 (LKCHIPDPS) is the Box 1 motif element. 2 disordered regions span residues 442–466 (AYGN…SLAS) and 479–498 (ELGD…QASV). The span at 487 to 497 (MSTNSSGQQAS) shows a compositional bias: polar residues.

Belongs to the type I cytokine receptor family. Type 4 subfamily. Non-covalent dimer of an alpha and a beta subunit. IL2R exists in 3 different forms: a high affinity dimer, an intermediate affinity monomer (beta subunit), and a low affinity monomer (alpha subunit). The high and intermediate affinity forms also associate with a gamma subunit. Interacts with SHB upon interleukin stimulation.

The protein resides in the cell membrane. It is found in the cell surface. Functionally, receptor for interleukin-2. This beta subunit is involved in receptor mediated endocytosis and transduces the mitogenic signals of IL2. Probably in association with IL15RA, involved in the stimulation of neutrophil phagocytosis by IL15. This Rattus norvegicus (Rat) protein is Interleukin-2 receptor subunit beta (Il2rb).